The chain runs to 126 residues: Glycine cleavage system H protein (126 aa).

In terms of domain architecture, Lipoyl-binding spans 22–104; the sequence is VATIGITEYA…YEKAWMVKVE (83 aa). The residue at position 63 (Lys-63) is an N6-lipoyllysine.

Belongs to the GcvH family. As to quaternary structure, the glycine cleavage system is composed of four proteins: P, T, L and H. (R)-lipoate is required as a cofactor.

Its function is as follows. The glycine cleavage system catalyzes the degradation of glycine. The H protein shuttles the methylamine group of glycine from the P protein to the T protein. Functionally, is also involved in protein lipoylation via its role as an octanoyl/lipoyl carrier protein intermediate. The chain is Glycine cleavage system H protein from Staphylococcus aureus (strain MSSA476).